The following is a 725-amino-acid chain: Prolyl 3-hydroxylase 1 (725 aa).

The N-terminal stretch at 1 to 14 is a signal peptide; sequence MALLLPLLPLLVWA. The TPR 1 repeat unit spans residues 36 to 69; it reads PDALFAAGAEAYARGDWPAVVLQMERALRARAAI. N-linked (GlcNAc...) asparagine glycosylation is present at N82. TPR repeat units follow at residues 136 to 169, 198 to 231, and 294 to 327; these read RSPYNYLQVAYFKINKVAKAVAAAHTFFVANPEH, HMTEFRLGVRFYSEEQPAAAVLHLEKALQEYFVA, and PSHFNYLQFAYYNNGNYEKAIECAKTYLLFFPND. Positions 394–441 form a coiled coil; that stretch reads KRLREKQKVERETAARISEEIGNLMKEIETLVEEKAKESAEMSKFIRE. Residues N460 and N533 are each glycosylated (N-linked (GlcNAc...) asparagine). The region spanning 557-671 is the Fe2OG dioxygenase domain; the sequence is SHLVCRTAID…RCAIALWFTL (115 aa). Residues H580, D582, and H652 each contribute to the Fe cation site. R662 is a catalytic residue. Over residues 701-715 the composition is skewed to polar residues; it reads ETSAEQEPTAATSTA. Positions 701–725 are disordered; the sequence is ETSAEQEPTAATSTAGLHAAGKDEL. Positions 722–725 match the Prevents secretion from ER motif; that stretch reads KDEL.

The protein belongs to the leprecan family. Binds unfolded collagen in a complex with CYPB and CRTAP. The cofactor is Fe cation. Requires L-ascorbate as cofactor. As to expression, expressed in embryonic dermis, tendon, cartilage, liver and kidney. Expression in the kidney is restricted to the calyx. In the liver, expression is restricted to the interlobular septum.

It is found in the endoplasmic reticulum. It catalyses the reaction L-prolyl-[collagen] + 2-oxoglutarate + O2 = trans-3-hydroxy-L-prolyl-[collagen] + succinate + CO2. In terms of biological role, has prolyl 3-hydroxylase activity catalyzing the post-translational formation of 3-hydroxyproline in -Xaa-Pro-Gly-sequences in collagens, especially types IV and V. May be involved in the secretoty pathway of cells. Has growth suppressive activity in fibroblasts. The polypeptide is Prolyl 3-hydroxylase 1 (Gallus gallus (Chicken)).